The primary structure comprises 706 residues: Elongation factor G (706 aa).

A tr-type G domain is found at 8–297 (SYVRNIGIGA…AVVDYLPSPN (290 aa)). GTP is bound by residues 17–24 (AHIDAGKT), 95–99 (DTPGH), and 149–152 (NKMD).

Belongs to the TRAFAC class translation factor GTPase superfamily. Classic translation factor GTPase family. EF-G/EF-2 subfamily.

The protein resides in the cytoplasm. Functionally, catalyzes the GTP-dependent ribosomal translocation step during translation elongation. During this step, the ribosome changes from the pre-translocational (PRE) to the post-translocational (POST) state as the newly formed A-site-bound peptidyl-tRNA and P-site-bound deacylated tRNA move to the P and E sites, respectively. Catalyzes the coordinated movement of the two tRNA molecules, the mRNA and conformational changes in the ribosome. The polypeptide is Elongation factor G (Orientia tsutsugamushi (strain Boryong) (Rickettsia tsutsugamushi)).